The sequence spans 382 residues: Homoserine O-acetyltransferase (382 aa).

The AB hydrolase-1 domain maps to N52–E356. The active-site Nucleophile is S157. Substrate is bound at residue R227. Catalysis depends on residues D320 and H350. Residue D351 coordinates substrate.

Belongs to the AB hydrolase superfamily. MetX family. Homodimer.

It localises to the cytoplasm. It catalyses the reaction L-homoserine + acetyl-CoA = O-acetyl-L-homoserine + CoA. The protein operates within amino-acid biosynthesis; L-methionine biosynthesis via de novo pathway; O-acetyl-L-homoserine from L-homoserine: step 1/1. In terms of biological role, transfers an acetyl group from acetyl-CoA to L-homoserine, forming acetyl-L-homoserine. This is Homoserine O-acetyltransferase from Mycobacterium leprae (strain TN).